Reading from the N-terminus, the 465-residue chain is ATP-dependent protease ATPase subunit HslU (465 aa).

ATP-binding positions include Val-20, 62 to 67 (GVGKTE), Asp-277, Glu-343, and Arg-415.

It belongs to the ClpX chaperone family. HslU subfamily. In terms of assembly, a double ring-shaped homohexamer of HslV is capped on each side by a ring-shaped HslU homohexamer. The assembly of the HslU/HslV complex is dependent on binding of ATP.

Its subcellular location is the cytoplasm. ATPase subunit of a proteasome-like degradation complex; this subunit has chaperone activity. The binding of ATP and its subsequent hydrolysis by HslU are essential for unfolding of protein substrates subsequently hydrolyzed by HslV. HslU recognizes the N-terminal part of its protein substrates and unfolds these before they are guided to HslV for hydrolysis. The polypeptide is ATP-dependent protease ATPase subunit HslU (Geobacillus kaustophilus (strain HTA426)).